A 509-amino-acid chain; its full sequence is 2-succinyl-5-enolpyruvyl-6-hydroxy-3-cyclohexene-1-carboxylate synthase (509 aa).

It belongs to the TPP enzyme family. MenD subfamily. Homodimer. It depends on Mg(2+) as a cofactor. Mn(2+) serves as cofactor. The cofactor is thiamine diphosphate.

It carries out the reaction isochorismate + 2-oxoglutarate + H(+) = 5-enolpyruvoyl-6-hydroxy-2-succinyl-cyclohex-3-ene-1-carboxylate + CO2. It functions in the pathway quinol/quinone metabolism; 1,4-dihydroxy-2-naphthoate biosynthesis; 1,4-dihydroxy-2-naphthoate from chorismate: step 2/7. It participates in quinol/quinone metabolism; menaquinone biosynthesis. Catalyzes the thiamine diphosphate-dependent decarboxylation of 2-oxoglutarate and the subsequent addition of the resulting succinic semialdehyde-thiamine pyrophosphate anion to isochorismate to yield 2-succinyl-5-enolpyruvyl-6-hydroxy-3-cyclohexene-1-carboxylate (SEPHCHC). The polypeptide is 2-succinyl-5-enolpyruvyl-6-hydroxy-3-cyclohexene-1-carboxylate synthase (Corynebacterium diphtheriae (strain ATCC 700971 / NCTC 13129 / Biotype gravis)).